The sequence spans 67 residues: Small ribosomal subunit protein eS27 (67 aa).

Zn(2+)-binding residues include Cys22, Cys25, Cys41, and Cys44. The C4-type zinc-finger motif lies at 22–44 (CPDCGNEQITFSHAAMVVRCLVC).

Belongs to the eukaryotic ribosomal protein eS27 family. In terms of assembly, part of the 30S ribosomal subunit. Zn(2+) is required as a cofactor.

The sequence is that of Small ribosomal subunit protein eS27 from Pyrobaculum aerophilum (strain ATCC 51768 / DSM 7523 / JCM 9630 / CIP 104966 / NBRC 100827 / IM2).